Here is a 126-residue protein sequence, read N- to C-terminus: Small ribosomal subunit protein uS8 (126 aa).

Belongs to the universal ribosomal protein uS8 family. In terms of assembly, part of the 30S ribosomal subunit. Contacts proteins S5 and S12.

One of the primary rRNA binding proteins, it binds directly to 16S rRNA central domain where it helps coordinate assembly of the platform of the 30S subunit. This Lawsonia intracellularis (strain PHE/MN1-00) protein is Small ribosomal subunit protein uS8.